The following is a 144-amino-acid chain: Large ribosomal subunit protein uL13 (144 aa).

The protein belongs to the universal ribosomal protein uL13 family. Part of the 50S ribosomal subunit.

In terms of biological role, this protein is one of the early assembly proteins of the 50S ribosomal subunit, although it is not seen to bind rRNA by itself. It is important during the early stages of 50S assembly. The polypeptide is Large ribosomal subunit protein uL13 (Clostridium acetobutylicum (strain ATCC 824 / DSM 792 / JCM 1419 / IAM 19013 / LMG 5710 / NBRC 13948 / NRRL B-527 / VKM B-1787 / 2291 / W)).